Here is a 392-residue protein sequence, read N- to C-terminus: Alanine racemase 2 (392 aa).

Lysine 40 (proton acceptor; specific for D-alanine) is an active-site residue. An N6-(pyridoxal phosphate)lysine modification is found at lysine 40. Arginine 138 contacts substrate. The active-site Proton acceptor; specific for L-alanine is the tyrosine 266. Residue methionine 314 coordinates substrate.

It belongs to the alanine racemase family. It depends on pyridoxal 5'-phosphate as a cofactor.

It catalyses the reaction L-alanine = D-alanine. Its pathway is amino-acid biosynthesis; D-alanine biosynthesis; D-alanine from L-alanine: step 1/1. In terms of biological role, catalyzes the interconversion of L-alanine and D-alanine. May also act on other amino acids. The sequence is that of Alanine racemase 2 (alr2) from Oceanobacillus iheyensis (strain DSM 14371 / CIP 107618 / JCM 11309 / KCTC 3954 / HTE831).